We begin with the raw amino-acid sequence, 347 residues long: NADH-quinone oxidoreductase subunit H (347 aa).

The next 9 helical transmembrane spans lie at 13–33 (IIMIGQSLLLLVCLLVFIAYV), 50–70 (PNVVGPFGLFQSFADLLKFVF), 82–102 (AVFLLAPLVTVLLALSTWAVV), 115–135 (VGILYIFAISSLEVYGIIMGG), 161–181 (IGFVIVTVLLCVGSLNLTDIV), 198–218 (FLDWHWLSLFPMFIIFFISAL), 263–283 (CSLTTILFLGGWLPPVDIWIL), 286–306 (VPGIIWFMLKACFVFFMFAMV), and 321–341 (LGWKVFLPLSLAMVIIVAFVL).

This sequence belongs to the complex I subunit 1 family. NDH-1 is composed of 14 different subunits. Subunits NuoA, H, J, K, L, M, N constitute the membrane sector of the complex.

The protein localises to the cell inner membrane. It catalyses the reaction a quinone + NADH + 5 H(+)(in) = a quinol + NAD(+) + 4 H(+)(out). NDH-1 shuttles electrons from NADH, via FMN and iron-sulfur (Fe-S) centers, to quinones in the respiratory chain. The immediate electron acceptor for the enzyme in this species is believed to be ubiquinone. Couples the redox reaction to proton translocation (for every two electrons transferred, four hydrogen ions are translocated across the cytoplasmic membrane), and thus conserves the redox energy in a proton gradient. This subunit may bind ubiquinone. The protein is NADH-quinone oxidoreductase subunit H of Rhizobium leguminosarum bv. trifolii (strain WSM2304).